A 196-amino-acid chain; its full sequence is Glycerol-3-phosphate acyltransferase (196 aa).

The next 5 membrane-spanning stretches (helical) occupy residues Leu-4 to Val-24, Ala-56 to Leu-76, Ser-80 to Phe-100, Thr-114 to Val-134, and Val-155 to Phe-175.

This sequence belongs to the PlsY family. Probably interacts with PlsX.

The protein resides in the cell inner membrane. It catalyses the reaction an acyl phosphate + sn-glycerol 3-phosphate = a 1-acyl-sn-glycero-3-phosphate + phosphate. It functions in the pathway lipid metabolism; phospholipid metabolism. Its function is as follows. Catalyzes the transfer of an acyl group from acyl-phosphate (acyl-PO(4)) to glycerol-3-phosphate (G3P) to form lysophosphatidic acid (LPA). This enzyme utilizes acyl-phosphate as fatty acyl donor, but not acyl-CoA or acyl-ACP. This Colwellia psychrerythraea (strain 34H / ATCC BAA-681) (Vibrio psychroerythus) protein is Glycerol-3-phosphate acyltransferase.